A 338-amino-acid polypeptide reads, in one-letter code: MLIAQRPTLTEESISEFRSKFVIEPLEPGFGYTIGNSLRRTLLSSIPGASVTSIKIEGVQHEFSTIEGCVEDVTEIILNLKGLVLSSEEDEPVAMYLRKTGAGEITAADINPPAGVTIHNPELHIATLNDDGRFEMELIVERGRGYVSSALNDDPNAEIGRIAVDSIYSPVLKVTYKVEATRVEQRTDFDKLVVDVETKPSILPRDAIASAGKTLVELFGLTRELNVEAEGIEIGSGPVDEEYAESLGTPVEELNLTVRSYNCLKREGIHTVGELVSRSEQDLLAIRNFGSKSIDEVKEKLTELGLALKDSAPGFDPLAAAEAYDEANDDDYAETEQY.

The tract at residues 1–226 (MLIAQRPTLT…ELFGLTRELN (226 aa)) is alpha N-terminal domain (alpha-NTD). An alpha C-terminal domain (alpha-CTD) region spans residues 243 to 338 (YAESLGTPVE…DDDYAETEQY (96 aa)). Positions 319–338 (AAAEAYDEANDDDYAETEQY) are disordered. Over residues 323 to 338 (AYDEANDDDYAETEQY) the composition is skewed to acidic residues.

This sequence belongs to the RNA polymerase alpha chain family. Homodimer. The RNAP catalytic core consists of 2 alpha, 1 beta, 1 beta' and 1 omega subunit. When a sigma factor is associated with the core the holoenzyme is formed, which can initiate transcription.

The catalysed reaction is RNA(n) + a ribonucleoside 5'-triphosphate = RNA(n+1) + diphosphate. Functionally, DNA-dependent RNA polymerase catalyzes the transcription of DNA into RNA using the four ribonucleoside triphosphates as substrates. This Cutibacterium acnes (strain DSM 16379 / KPA171202) (Propionibacterium acnes) protein is DNA-directed RNA polymerase subunit alpha.